The following is a 382-amino-acid chain: Homoserine O-acetyltransferase (382 aa).

Positions 52 to 356 (NVVMVLHALT…TYGHDGFLVE (305 aa)) constitute an AB hydrolase-1 domain. Ser157 acts as the Nucleophile in catalysis. Arg227 is a substrate binding site. Active-site residues include Asp320 and His350. Asp351 contributes to the substrate binding site.

This sequence belongs to the AB hydrolase superfamily. MetX family. In terms of assembly, homodimer.

Its subcellular location is the cytoplasm. The enzyme catalyses L-homoserine + acetyl-CoA = O-acetyl-L-homoserine + CoA. Its pathway is amino-acid biosynthesis; L-methionine biosynthesis via de novo pathway; O-acetyl-L-homoserine from L-homoserine: step 1/1. Functionally, transfers an acetyl group from acetyl-CoA to L-homoserine, forming acetyl-L-homoserine. In Mycobacterium leprae (strain TN), this protein is Homoserine O-acetyltransferase.